A 64-amino-acid chain; its full sequence is Disintegrin (64 aa).

The region spanning asparagine 1–histidine 64 is the Disintegrin domain. 4 disulfides stabilise this stretch: cysteine 6-cysteine 29, cysteine 20-cysteine 26, cysteine 25-cysteine 50, and cysteine 38-cysteine 57. The short motif at methionine 42–aspartate 44 is the Cell attachment site; atypical (MLD) element.

It belongs to the disintegrin family. Dimeric disintegrin subfamily. As to quaternary structure, heterodimer; disulfide-linked. As to expression, expressed by the venom gland.

Its subcellular location is the secreted. Inhibits adhesion of cells expressing alpha-4/beta-1 (ITGA4/ITGB1) and alpha-4/beta-7 (ITGA4/ITGB7) integrins to the natural ligands vascular cell adhesion molecule 1 (VCAM-1) and mucosal addressin cell adhesion molecule 1 (MADCAM-1). The sequence is that of Disintegrin from Echis carinatus (Saw-scaled viper).